A 218-amino-acid polypeptide reads, in one-letter code: Adapter protein MecA (218 aa).

The protein belongs to the MecA family. In terms of assembly, homodimer.

Functionally, enables the recognition and targeting of unfolded and aggregated proteins to the ClpC protease or to other proteins involved in proteolysis. This is Adapter protein MecA from Exiguobacterium sp. (strain ATCC BAA-1283 / AT1b).